Reading from the N-terminus, the 119-residue chain is NADH dehydrogenase [ubiquinone] 1 subunit C2 (119 aa).

A helical transmembrane segment spans residues 56-75 (GLHRQLLYITAFFFAGYYLV).

This sequence belongs to the complex I NDUFC2 subunit family. In terms of assembly, complex I is composed of 45 different subunits. Interacts with TMEM242.

The protein localises to the mitochondrion inner membrane. Accessory subunit of the mitochondrial membrane respiratory chain NADH dehydrogenase (Complex I), that is believed not to be involved in catalysis but required for the complex assembly. Complex I functions in the transfer of electrons from NADH to the respiratory chain. The immediate electron acceptor for the enzyme is believed to be ubiquinone. The polypeptide is NADH dehydrogenase [ubiquinone] 1 subunit C2 (Pan troglodytes (Chimpanzee)).